Reading from the N-terminus, the 386-residue chain is Ferrochelatase (386 aa).

Residues His-196 and Glu-277 each contribute to the Fe cation site.

Belongs to the ferrochelatase family.

The protein resides in the cytoplasm. It catalyses the reaction heme b + 2 H(+) = protoporphyrin IX + Fe(2+). It functions in the pathway porphyrin-containing compound metabolism; protoheme biosynthesis; protoheme from protoporphyrin-IX: step 1/1. Functionally, catalyzes the ferrous insertion into protoporphyrin IX. The sequence is that of Ferrochelatase from Picosynechococcus sp. (strain ATCC 27264 / PCC 7002 / PR-6) (Agmenellum quadruplicatum).